The primary structure comprises 380 residues: Transcription factor SOX-7 (380 aa).

The interval 24 to 43 (SDGLSPPAVPRPSGDKSSES) is disordered. The segment at residues 45-113 (IRRPMNAFMV…QHMQDYPNYK (69 aa)) is a DNA-binding region (HMG box). Residues 139 to 167 (SRDQNTLPEKNGIGRGEKEDRGEYSPGAT) form a disordered region. The Sox C-terminal domain maps to 260 to 380 (VSMMSSVSGC…ATYYNSYSVS (121 aa)). The tract at residues 323 to 328 (EFDQYL) is required for beta-catenin-binding.

Interacts with CTNNB1/beta-catenin; this interaction may lead to the proteasomal degradation of active CTNNB1 and thus inhibition of Wnt/beta-catenin-stimulated transcription. Predominantly expressed in ovary, lung and heart. In the ovary, restricted to oocytes (at protein level). Present both in mesenchymal and epithelial cells in some adult tissues, including ear.

The protein localises to the nucleus. Its subcellular location is the cytoplasm. Its function is as follows. Binds to and activates the CDH5 promoter, hence plays a role in the transcriptional regulation of genes expressed in the hemogenic endothelium and blocks further differentiation into blood precursors. May be required for the survival of both hematopoietic and endothelial precursors during specification. May play a role in skeletal myogenesis and up-regulate the expression of muscle markers, such as PAX3/PAX7 and Meox1. Competes with GATA4 for binding and activation of the FGF3 promoter. Represses Wnt/beta-catenin-stimulated transcription. Probably acts by targeting CTNNB1 to proteasomal degradation. Binds the DNA sequence 5'-AACAAT-3'. In Mus musculus (Mouse), this protein is Transcription factor SOX-7 (Sox7).